A 95-amino-acid polypeptide reads, in one-letter code: Small ribosomal subunit protein bS20 (95 aa).

It belongs to the bacterial ribosomal protein bS20 family.

Functionally, binds directly to 16S ribosomal RNA. The sequence is that of Small ribosomal subunit protein bS20 from Ehrlichia chaffeensis (strain ATCC CRL-10679 / Arkansas).